Consider the following 282-residue polypeptide: 4-hydroxy-3-methylbut-2-enyl diphosphate reductase (282 aa).

Cysteine 14 is a [4Fe-4S] cluster binding site. Histidine 43 and histidine 78 together coordinate (2E)-4-hydroxy-3-methylbut-2-enyl diphosphate. Residues histidine 43 and histidine 78 each coordinate dimethylallyl diphosphate. Isopentenyl diphosphate contacts are provided by histidine 43 and histidine 78. Residue cysteine 100 coordinates [4Fe-4S] cluster. Residue histidine 128 participates in (2E)-4-hydroxy-3-methylbut-2-enyl diphosphate binding. Histidine 128 serves as a coordination point for dimethylallyl diphosphate. Histidine 128 contributes to the isopentenyl diphosphate binding site. The Proton donor role is filled by glutamate 130. Residue threonine 164 participates in (2E)-4-hydroxy-3-methylbut-2-enyl diphosphate binding. Position 192 (cysteine 192) interacts with [4Fe-4S] cluster. (2E)-4-hydroxy-3-methylbut-2-enyl diphosphate is bound by residues serine 220, serine 221, asparagine 222, and serine 266. Dimethylallyl diphosphate contacts are provided by serine 220, serine 221, asparagine 222, and serine 266. Residues serine 220, serine 221, asparagine 222, and serine 266 each coordinate isopentenyl diphosphate.

Belongs to the IspH family. The cofactor is [4Fe-4S] cluster.

The catalysed reaction is isopentenyl diphosphate + 2 oxidized [2Fe-2S]-[ferredoxin] + H2O = (2E)-4-hydroxy-3-methylbut-2-enyl diphosphate + 2 reduced [2Fe-2S]-[ferredoxin] + 2 H(+). It catalyses the reaction dimethylallyl diphosphate + 2 oxidized [2Fe-2S]-[ferredoxin] + H2O = (2E)-4-hydroxy-3-methylbut-2-enyl diphosphate + 2 reduced [2Fe-2S]-[ferredoxin] + 2 H(+). The protein operates within isoprenoid biosynthesis; dimethylallyl diphosphate biosynthesis; dimethylallyl diphosphate from (2E)-4-hydroxy-3-methylbutenyl diphosphate: step 1/1. It participates in isoprenoid biosynthesis; isopentenyl diphosphate biosynthesis via DXP pathway; isopentenyl diphosphate from 1-deoxy-D-xylulose 5-phosphate: step 6/6. Its function is as follows. Catalyzes the conversion of 1-hydroxy-2-methyl-2-(E)-butenyl 4-diphosphate (HMBPP) into a mixture of isopentenyl diphosphate (IPP) and dimethylallyl diphosphate (DMAPP). Acts in the terminal step of the DOXP/MEP pathway for isoprenoid precursor biosynthesis. This chain is 4-hydroxy-3-methylbut-2-enyl diphosphate reductase, found in Clostridium perfringens (strain ATCC 13124 / DSM 756 / JCM 1290 / NCIMB 6125 / NCTC 8237 / Type A).